We begin with the raw amino-acid sequence, 309 residues long: Porphobilinogen deaminase (309 aa).

The residue at position 241 (C241) is an S-(dipyrrolylmethanemethyl)cysteine.

The protein belongs to the HMBS family. In terms of assembly, monomer. The cofactor is dipyrromethane.

The enzyme catalyses 4 porphobilinogen + H2O = hydroxymethylbilane + 4 NH4(+). It participates in porphyrin-containing compound metabolism; protoporphyrin-IX biosynthesis; coproporphyrinogen-III from 5-aminolevulinate: step 2/4. Its function is as follows. Tetrapolymerization of the monopyrrole PBG into the hydroxymethylbilane pre-uroporphyrinogen in several discrete steps. The polypeptide is Porphobilinogen deaminase (Oceanobacillus iheyensis (strain DSM 14371 / CIP 107618 / JCM 11309 / KCTC 3954 / HTE831)).